A 383-amino-acid chain; its full sequence is Mating-type protein MAT-1 (383 aa).

The alpha box DNA-binding region spans 60–117; it reads KARKALNAFVGFRCYYVTIPMFKSWPMKKLSNLIGLLWEADPNKSLWSLMAKAWSTIR.

It belongs to the MATALPHA1 family.

It is found in the nucleus. Functionally, mating type proteins are sequence specific DNA-binding proteins that act as master switches in fungal differentiation by controlling gene expression in a cell type-specific fashion. Transcriptional activator that induces the transcription of alpha-specific genes. This is Mating-type protein MAT-1 (MAT1) from Cochliobolus heterostrophus (Southern corn leaf blight fungus).